The following is a 542-amino-acid chain: MPLRDETLREVWASDSGHEEESLSPEAPRRPKQRPAPAQRLRKKRTEAPESPCPTGSKPRKPGAGRTGRPREEPSPDPAQARAPQTVYARFLRDPEAKKRDPRETFLVARAPDAEDEEEEEEEDEEDEEEEAEEKKEKILLPPKKPLREKSSADLKERRAKAQGPRGDLGSPDPPPKPLRVRNKEAPAGEGTKMRKTKKKGSGEADKDPSGSPASARKSPAAMFLVGEGSPDKKALKKKGTPKGARKEEEEEEEAATVIKKSNQKGKAKGKGKKKAKEERAPSPPVEVDEPREFVLRPAPQGRTVRCRLTRDKKGMDRGMYPSYFLHLDTEKKVFLLAGRKRKRSKTANYLISIDPTNLSRGGENFIGKLRSNLLGNRFTVFDNGQNPQRGYSTNVASLRQELAAVIYETNVLGFRGPRRMTVIIPGMSAENERVPIRPRNASDGLLVRWQNKTLESLIELHNKPPVWNDDSGSYTLNFQGRVTQASVKNFQIVHADDPDYIVLQFGRVAEDAFTLDYRYPLCALQAFAIALSSFDGKLACE.

The interval 1–289 is disordered; sequence MPLRDETLRE…RAPSPPVEVD (289 aa). The span at 91 to 104 shows a compositional bias: basic and acidic residues; the sequence is FLRDPEAKKRDPRE. The segment covering 114–132 has biased composition (acidic residues); that stretch reads AEDEEEEEEEDEEDEEEEA. A compositionally biased stretch (basic and acidic residues) spans 146 to 157; the sequence is PLREKSSADLKE. Residues 262-275 are compositionally biased toward basic residues; the sequence is SNQKGKAKGKGKKK.

Belongs to the TUB family. In terms of assembly, homodimer. May interact with ABCF1, PSIP1, ZEB1 and HMGB2 (Potential). Interacts with DNM1. Interacts with F-actin. Interacts with TUB. Interacts with TYRO3. In terms of tissue distribution, retina-specific.

The protein resides in the cytoplasm. The protein localises to the cell membrane. It is found in the secreted. It localises to the synapse. Required for normal development of photoreceptor synapses. Required for normal photoreceptor function and for long-term survival of photoreceptor cells. Interacts with cytoskeleton proteins and may play a role in protein transport in photoreceptor cells. Binds lipids, especially phosphatidylinositol 3-phosphate, phosphatidylinositol 4-phosphate, phosphatidylinositol 5-phosphate, phosphatidylinositol 3,4-bisphosphate, phosphatidylinositol 4,5-bisphosphate, phosphatidylinositol 3,4,5-bisphosphate, phosphatidylserine and phosphatidic acid (in vitro). Contribute to stimulation of phagocytosis of apoptotic retinal pigment epithelium (RPE) cells and macrophages. The chain is Tubby-related protein 1 (TULP1) from Homo sapiens (Human).